Reading from the N-terminus, the 199-residue chain is Holliday junction branch migration complex subunit RuvA (199 aa).

The segment at 1 to 63 is domain I; sequence MIGKLNGKID…EEHIHLYGFL (63 aa). A domain II region spans residues 64–141; it reads TLEEKNFFNL…TKIFSSSAII (78 aa). The flexible linker stretch occupies residues 141–145; sequence IKDSN. A domain III region spans residues 146–199; the sequence is ISSIAINEVMKALVNLGFTRFEAQNTVQGIITQNPKISIDELIKTALKNRNSSF.

The protein belongs to the RuvA family. Homotetramer. Forms an RuvA(8)-RuvB(12)-Holliday junction (HJ) complex. HJ DNA is sandwiched between 2 RuvA tetramers; dsDNA enters through RuvA and exits via RuvB. An RuvB hexamer assembles on each DNA strand where it exits the tetramer. Each RuvB hexamer is contacted by two RuvA subunits (via domain III) on 2 adjacent RuvB subunits; this complex drives branch migration. In the full resolvosome a probable DNA-RuvA(4)-RuvB(12)-RuvC(2) complex forms which resolves the HJ.

It localises to the cytoplasm. Its function is as follows. The RuvA-RuvB-RuvC complex processes Holliday junction (HJ) DNA during genetic recombination and DNA repair, while the RuvA-RuvB complex plays an important role in the rescue of blocked DNA replication forks via replication fork reversal (RFR). RuvA specifically binds to HJ cruciform DNA, conferring on it an open structure. The RuvB hexamer acts as an ATP-dependent pump, pulling dsDNA into and through the RuvAB complex. HJ branch migration allows RuvC to scan DNA until it finds its consensus sequence, where it cleaves and resolves the cruciform DNA. This chain is Holliday junction branch migration complex subunit RuvA, found in Rickettsia prowazekii (strain Madrid E).